Reading from the N-terminus, the 93-residue chain is Large ribosomal subunit protein uL23 (93 aa).

It belongs to the universal ribosomal protein uL23 family. In terms of assembly, part of the 50S ribosomal subunit. Contacts protein L29, and trigger factor when it is bound to the ribosome.

One of the early assembly proteins it binds 23S rRNA. One of the proteins that surrounds the polypeptide exit tunnel on the outside of the ribosome. Forms the main docking site for trigger factor binding to the ribosome. This is Large ribosomal subunit protein uL23 from Helicobacter acinonychis (strain Sheeba).